We begin with the raw amino-acid sequence, 97 residues long: Alpha-latrotoxin associated low molecular weight protein 2 (97 aa).

The N-terminal stretch at 1–19 is a signal peptide; the sequence is MFKLICIVFIATILSITSA. Intrachain disulfides connect C36–C72, C52–C68, and C55–C81.

The protein belongs to the arthropod CHH/MIH/GIH/VIH hormone family. Expressed by the venom gland.

It localises to the secreted. May increase the toxicity of alpha-latrotoxin and/or other venom components. Is non-toxic to mice and to the cockroach Periplaneta americana. This is Alpha-latrotoxin associated low molecular weight protein 2 from Steatoda grossa (False black widow).